The chain runs to 547 residues: Probable hydroxyacid-oxoacid transhydrogenase, mitochondrial (547 aa).

The protein belongs to the iron-containing alcohol dehydrogenase family. Hydroxyacid-oxoacid transhydrogenase subfamily.

It is found in the mitochondrion. It catalyses the reaction (S)-3-hydroxybutanoate + 2-oxoglutarate = (R)-2-hydroxyglutarate + acetoacetate. The enzyme catalyses 4-hydroxybutanoate + 2-oxoglutarate = (R)-2-hydroxyglutarate + succinate semialdehyde. Catalyzes the cofactor-independent reversible oxidation of gamma-hydroxybutyrate (GHB) to succinic semialdehyde (SSA) coupled to reduction of 2-ketoglutarate (2-KG) to D-2-hydroxyglutarate (D-2-HG). L-3-hydroxybutyrate (L-3-OHB) is also a substrate for HOT when using 2-KG as hydrogen acceptor, resulting in the formation of D-2-HG. The sequence is that of Probable hydroxyacid-oxoacid transhydrogenase, mitochondrial (adhfe1) from Dictyostelium discoideum (Social amoeba).